A 293-amino-acid polypeptide reads, in one-letter code: Formamidopyrimidine-DNA glycosylase (293 aa).

P2 (schiff-base intermediate with DNA) is an active-site residue. E3 acts as the Proton donor in catalysis. K58 acts as the Proton donor; for beta-elimination activity in catalysis. Residues H104, R127, and R170 each coordinate DNA. The segment at 257 to 293 (SVYGREGKPCRNPACGGTVERVVQSGRSTFFCASCQT) adopts an FPG-type zinc-finger fold. Residue R283 is the Proton donor; for delta-elimination activity of the active site.

The protein belongs to the FPG family. As to quaternary structure, monomer. The cofactor is Zn(2+).

The catalysed reaction is Hydrolysis of DNA containing ring-opened 7-methylguanine residues, releasing 2,6-diamino-4-hydroxy-5-(N-methyl)formamidopyrimidine.. It carries out the reaction 2'-deoxyribonucleotide-(2'-deoxyribose 5'-phosphate)-2'-deoxyribonucleotide-DNA = a 3'-end 2'-deoxyribonucleotide-(2,3-dehydro-2,3-deoxyribose 5'-phosphate)-DNA + a 5'-end 5'-phospho-2'-deoxyribonucleoside-DNA + H(+). Involved in base excision repair of DNA damaged by oxidation or by mutagenic agents. Acts as a DNA glycosylase that recognizes and removes damaged bases. Has a preference for oxidized purines, such as 7,8-dihydro-8-oxoguanine (8-oxoG). Has AP (apurinic/apyrimidinic) lyase activity and introduces nicks in the DNA strand. Cleaves the DNA backbone by beta-delta elimination to generate a single-strand break at the site of the removed base with both 3'- and 5'-phosphates. The protein is Formamidopyrimidine-DNA glycosylase of Brucella canis (strain ATCC 23365 / NCTC 10854 / RM-666).